Here is a 236-residue protein sequence, read N- to C-terminus: Ubiquinone biosynthesis O-methyltransferase (236 aa).

Residues Arg-39, Gly-59, Asp-80, and Met-124 each contribute to the S-adenosyl-L-methionine site.

The protein belongs to the methyltransferase superfamily. UbiG/COQ3 family.

It carries out the reaction a 3-demethylubiquinol + S-adenosyl-L-methionine = a ubiquinol + S-adenosyl-L-homocysteine + H(+). The catalysed reaction is a 3-(all-trans-polyprenyl)benzene-1,2-diol + S-adenosyl-L-methionine = a 2-methoxy-6-(all-trans-polyprenyl)phenol + S-adenosyl-L-homocysteine + H(+). Its pathway is cofactor biosynthesis; ubiquinone biosynthesis. Functionally, O-methyltransferase that catalyzes the 2 O-methylation steps in the ubiquinone biosynthetic pathway. The chain is Ubiquinone biosynthesis O-methyltransferase from Shewanella putrefaciens (strain CN-32 / ATCC BAA-453).